We begin with the raw amino-acid sequence, 579 residues long: Insulin-like growth factor 2 mRNA-binding protein 3 (579 aa).

2 consecutive RRM domains span residues Asn-2–Pro-75 and Arg-81–Asp-156. Positions Thr-158–Lys-192 are disordered. A Phosphoserine modification is found at Ser-165. Ser-184 is subject to Phosphoserine; by MTOR. 3 KH domains span residues Asp-195–Ile-260, Glu-276–Ile-343, and Thr-405–Ile-470. Glycyl lysine isopeptide (Lys-Gly) (interchain with G-Cter in SUMO2) cross-links involve residues Lys-450 and Lys-475. The 67-residue stretch at Lys-487 to Ile-553 folds into the KH 4 domain. Residue Thr-528 is modified to Phosphothreonine.

This sequence belongs to the RRM IMP/VICKZ family. Can form homooligomers and heterooligomers with IGF2BP1 and IGF2BP3 in an RNA-dependent manner. Interacts with IGF2BP1. Interacts with ELAVL1, DHX9, HNRNPU, MATR3 and PABPC1. As to expression, expressed in oocytes, spermatogonia and spermatocytes (at protein level).

The protein localises to the nucleus. It localises to the cytoplasm. The protein resides in the P-body. Its subcellular location is the stress granule. Functionally, RNA-binding factor that may recruit target transcripts to cytoplasmic protein-RNA complexes (mRNPs). This transcript 'caging' into mRNPs allows mRNA transport and transient storage. It also modulates the rate and location at which target transcripts encounter the translational apparatus and shields them from endonuclease attacks or microRNA-mediated degradation. Preferentially binds to N6-methyladenosine (m6A)-containing mRNAs and increases their stability. Binds to the 3'-UTR of CD44 mRNA and stabilizes it, hence promotes cell adhesion and invadopodia formation. Binds to beta-actin/ACTB and MYC transcripts. Increases MYC mRNA stability by binding to the coding region instability determinant (CRD) and binding is enhanced by m6A-modification of the CRD. Binds to the 5'-UTR of the insulin-like growth factor 2 (IGF2) mRNAs. This chain is Insulin-like growth factor 2 mRNA-binding protein 3 (Igf2bp3), found in Mus musculus (Mouse).